The sequence spans 379 residues: Cobalt-precorrin-5B C(1)-methyltransferase (379 aa).

The protein belongs to the CbiD family.

The catalysed reaction is Co-precorrin-5B + S-adenosyl-L-methionine = Co-precorrin-6A + S-adenosyl-L-homocysteine. Its pathway is cofactor biosynthesis; adenosylcobalamin biosynthesis; cob(II)yrinate a,c-diamide from sirohydrochlorin (anaerobic route): step 6/10. Its function is as follows. Catalyzes the methylation of C-1 in cobalt-precorrin-5B to form cobalt-precorrin-6A. In Salmonella arizonae (strain ATCC BAA-731 / CDC346-86 / RSK2980), this protein is Cobalt-precorrin-5B C(1)-methyltransferase.